The following is a 396-amino-acid chain: MAKAKFERNKPHCNIGTIGHVDHGKTSLTAAITKVLAETGGATFTAYDQIDKAPEEKARGITISTAHVEYETANRHYAHVDCPGHADYVKNMITGAAQMDGAILVVSAADGPMPQTREHILLARQVGVPALVVFLNKCDMVDDPELLELVEMEVRELLSKYDFPGDDIPIVKGSALAALENKDPKLGHDAILELMKAVDAYIPQPERPIDQPFLMPVEDVFSISGRGTVVTGRVERGIVKVGEEIEIVGLRDTQKTIVTGVEMFRKLLDQGQAGDNIGALLRGTKREEVERGQVLCKPGSVKPHTKFKAEAYILTKEEGGRHTPFFTNYRPQFYFRTTDVTGVVHLPEGTEMVMPGDNIAMEVHLIVPIAMEEKLRFAIREGGRTVGAGVVASIIE.

In terms of domain architecture, tr-type G spans 10–206 (KPHCNIGTIG…AVDAYIPQPE (197 aa)). Residues 19–26 (GHVDHGKT) are G1. 19–26 (GHVDHGKT) contributes to the GTP binding site. Threonine 26 provides a ligand contact to Mg(2+). A G2 region spans residues 60–64 (GITIS). Residues 81 to 84 (DCPG) are G3. GTP-binding positions include 81–85 (DCPGH) and 136–139 (NKCD). The segment at 136–139 (NKCD) is G4. The segment at 174–176 (SAL) is G5.

The protein belongs to the TRAFAC class translation factor GTPase superfamily. Classic translation factor GTPase family. EF-Tu/EF-1A subfamily. In terms of assembly, monomer.

It localises to the cytoplasm. The catalysed reaction is GTP + H2O = GDP + phosphate + H(+). GTP hydrolase that promotes the GTP-dependent binding of aminoacyl-tRNA to the A-site of ribosomes during protein biosynthesis. The protein is Elongation factor Tu of Rhodopseudomonas palustris (strain BisB18).